We begin with the raw amino-acid sequence, 650 residues long: DNA gyrase subunit B (650 aa).

Residues 429–543 enclose the Toprim domain; that stretch reads NELFIVEGDS…AGYVYIAQPP (115 aa). Mg(2+)-binding residues include E435, D508, and D510.

It belongs to the type II topoisomerase GyrB family. In terms of assembly, heterotetramer, composed of two GyrA and two GyrB chains. In the heterotetramer, GyrA contains the active site tyrosine that forms a transient covalent intermediate with DNA, while GyrB binds cofactors and catalyzes ATP hydrolysis. Mg(2+) serves as cofactor. The cofactor is Mn(2+). Ca(2+) is required as a cofactor.

It localises to the cytoplasm. The enzyme catalyses ATP-dependent breakage, passage and rejoining of double-stranded DNA.. Its function is as follows. A type II topoisomerase that negatively supercoils closed circular double-stranded (ds) DNA in an ATP-dependent manner to modulate DNA topology and maintain chromosomes in an underwound state. Negative supercoiling favors strand separation, and DNA replication, transcription, recombination and repair, all of which involve strand separation. Also able to catalyze the interconversion of other topological isomers of dsDNA rings, including catenanes and knotted rings. Type II topoisomerases break and join 2 DNA strands simultaneously in an ATP-dependent manner. This Streptococcus pyogenes serotype M3 (strain ATCC BAA-595 / MGAS315) protein is DNA gyrase subunit B.